We begin with the raw amino-acid sequence, 414 residues long: Gamma-glutamyl phosphate reductase (414 aa).

It belongs to the gamma-glutamyl phosphate reductase family.

It localises to the cytoplasm. The catalysed reaction is L-glutamate 5-semialdehyde + phosphate + NADP(+) = L-glutamyl 5-phosphate + NADPH + H(+). It participates in amino-acid biosynthesis; L-proline biosynthesis; L-glutamate 5-semialdehyde from L-glutamate: step 2/2. Catalyzes the NADPH-dependent reduction of L-glutamate 5-phosphate into L-glutamate 5-semialdehyde and phosphate. The product spontaneously undergoes cyclization to form 1-pyrroline-5-carboxylate. The protein is Gamma-glutamyl phosphate reductase of Clostridium botulinum (strain Alaska E43 / Type E3).